Reading from the N-terminus, the 700-residue chain is Beta-galactosidase Bga (700 aa).

R103 lines the substrate pocket. C107 lines the Zn(2+) pocket. A substrate-binding site is contributed by N141. The Proton donor role is filled by E142. Residues C151, C153, and C156 each contribute to the Zn(2+) site. E312 acts as the Nucleophile in catalysis. Residues W320 and 360–363 (EQYH) each bind substrate. Residues 648-658 (DPESLAVDDTD) show a composition bias toward acidic residues. Positions 648-674 (DPESLAVDDTDRDGFDPMADDDKDSSA) are disordered.

It belongs to the glycosyl hydrolase 42 family.

The catalysed reaction is Hydrolysis of terminal non-reducing beta-D-galactose residues in beta-D-galactosides.. Its activity is regulated as follows. Requires 4 M NaCl or KCl for maximal activity. Its function is as follows. Cleaves o-nitrophenyl-beta-D-galactopyranoside (ONPG) in vitro. This chain is Beta-galactosidase Bga, found in Halorubrum lacusprofundi (strain ATCC 49239 / DSM 5036 / JCM 8891 / ACAM 34).